Reading from the N-terminus, the 266-residue chain is MAKMTILKMKARLEKELDAPNRQFAYNRDNDTLSVTQNGKKVTLTIPQIVANYENDGDAAVEKIVYYVEEGFRAAAGNVELKNNQANIYPVVRATSFPSKTKAGEVLLTDEHTAETKIFYAFDLGKSYRFIEEGMLEKAQLTHKEIREAAFRNLANLAIPLKKDAVNGNDFYFVRTNDGYDASRLLNEAFLREMREKITGEMVLAVPHQDVLIIGDIQDNTGYDVLAHMTMDFFADGLVPITSLPFVYNNGKLEPIFIMAKNRLKE.

This sequence belongs to the UPF0354 family.

In Listeria monocytogenes serotype 4a (strain HCC23), this protein is UPF0354 protein LMHCC_0955.